Here is a 207-residue protein sequence, read N- to C-terminus: Thiamine-phosphate synthase (207 aa).

4-amino-2-methyl-5-(diphosphooxymethyl)pyrimidine-binding positions include 35–39 (QYRDK) and Asn-67. Mg(2+) contacts are provided by Asp-68 and Asp-86. 4-amino-2-methyl-5-(diphosphooxymethyl)pyrimidine is bound at residue Thr-105. 132–134 (SVT) lines the 2-[(2R,5Z)-2-carboxy-4-methylthiazol-5(2H)-ylidene]ethyl phosphate pocket. Lys-135 is a 4-amino-2-methyl-5-(diphosphooxymethyl)pyrimidine binding site. Gly-162 provides a ligand contact to 2-[(2R,5Z)-2-carboxy-4-methylthiazol-5(2H)-ylidene]ethyl phosphate.

This sequence belongs to the thiamine-phosphate synthase family. The cofactor is Mg(2+).

It catalyses the reaction 2-[(2R,5Z)-2-carboxy-4-methylthiazol-5(2H)-ylidene]ethyl phosphate + 4-amino-2-methyl-5-(diphosphooxymethyl)pyrimidine + 2 H(+) = thiamine phosphate + CO2 + diphosphate. The catalysed reaction is 2-(2-carboxy-4-methylthiazol-5-yl)ethyl phosphate + 4-amino-2-methyl-5-(diphosphooxymethyl)pyrimidine + 2 H(+) = thiamine phosphate + CO2 + diphosphate. It carries out the reaction 4-methyl-5-(2-phosphooxyethyl)-thiazole + 4-amino-2-methyl-5-(diphosphooxymethyl)pyrimidine + H(+) = thiamine phosphate + diphosphate. The protein operates within cofactor biosynthesis; thiamine diphosphate biosynthesis; thiamine phosphate from 4-amino-2-methyl-5-diphosphomethylpyrimidine and 4-methyl-5-(2-phosphoethyl)-thiazole: step 1/1. Its function is as follows. Condenses 4-methyl-5-(beta-hydroxyethyl)thiazole monophosphate (THZ-P) and 2-methyl-4-amino-5-hydroxymethyl pyrimidine pyrophosphate (HMP-PP) to form thiamine monophosphate (TMP). This Pseudomonas putida (strain ATCC 700007 / DSM 6899 / JCM 31910 / BCRC 17059 / LMG 24140 / F1) protein is Thiamine-phosphate synthase.